A 162-amino-acid polypeptide reads, in one-letter code: Shikimate kinase (162 aa).

10-15 (GAGKST) is an ATP binding site. Serine 14 contributes to the Mg(2+) binding site. Residues aspartate 28, arginine 52, and glycine 73 each contribute to the substrate site. Residue arginine 113 coordinates ATP. Arginine 129 provides a ligand contact to substrate.

Belongs to the shikimate kinase family. In terms of assembly, monomer. It depends on Mg(2+) as a cofactor.

Its subcellular location is the cytoplasm. The catalysed reaction is shikimate + ATP = 3-phosphoshikimate + ADP + H(+). The protein operates within metabolic intermediate biosynthesis; chorismate biosynthesis; chorismate from D-erythrose 4-phosphate and phosphoenolpyruvate: step 5/7. In terms of biological role, catalyzes the specific phosphorylation of the 3-hydroxyl group of shikimic acid using ATP as a cosubstrate. This Lactococcus lactis subsp. cremoris (strain SK11) protein is Shikimate kinase.